A 384-amino-acid chain; its full sequence is Dual-specificity RNA methyltransferase RlmN (384 aa).

E105 acts as the Proton acceptor in catalysis. A Radical SAM core domain is found at E111 to D350. C118 and C355 are oxidised to a cystine. [4Fe-4S] cluster-binding residues include C125, C129, and C132. Residues G179–E180, S211, S233–H235, and N312 contribute to the S-adenosyl-L-methionine site. C355 (S-methylcysteine intermediate) is an active-site residue.

It belongs to the radical SAM superfamily. RlmN family. [4Fe-4S] cluster is required as a cofactor.

It localises to the cytoplasm. It catalyses the reaction adenosine(2503) in 23S rRNA + 2 reduced [2Fe-2S]-[ferredoxin] + 2 S-adenosyl-L-methionine = 2-methyladenosine(2503) in 23S rRNA + 5'-deoxyadenosine + L-methionine + 2 oxidized [2Fe-2S]-[ferredoxin] + S-adenosyl-L-homocysteine. The enzyme catalyses adenosine(37) in tRNA + 2 reduced [2Fe-2S]-[ferredoxin] + 2 S-adenosyl-L-methionine = 2-methyladenosine(37) in tRNA + 5'-deoxyadenosine + L-methionine + 2 oxidized [2Fe-2S]-[ferredoxin] + S-adenosyl-L-homocysteine. Functionally, specifically methylates position 2 of adenine 2503 in 23S rRNA and position 2 of adenine 37 in tRNAs. m2A2503 modification seems to play a crucial role in the proofreading step occurring at the peptidyl transferase center and thus would serve to optimize ribosomal fidelity. The sequence is that of Dual-specificity RNA methyltransferase RlmN from Escherichia fergusonii (strain ATCC 35469 / DSM 13698 / CCUG 18766 / IAM 14443 / JCM 21226 / LMG 7866 / NBRC 102419 / NCTC 12128 / CDC 0568-73).